We begin with the raw amino-acid sequence, 837 residues long: Probable aldehyde oxidase 4 (837 aa).

In terms of domain architecture, 2Fe-2S ferredoxin-type spans 9–98 (ERVVFELNGE…FCSIITTEGL (90 aa)). [2Fe-2S] cluster-binding residues include C50, C55, C58, and C80. One can recognise an FAD-binding PCMH-type domain in the interval 240-427 (ISGPREGWYC…LSIFIPHWAS (188 aa)).

The protein belongs to the xanthine dehydrogenase family. In terms of assembly, aldehyde oxidases (AO) are homodimers and heterodimers of AO subunits. [2Fe-2S] cluster serves as cofactor. The cofactor is FAD. Mo-molybdopterin is required as a cofactor.

The catalysed reaction is an aldehyde + O2 + H2O = a carboxylate + H2O2 + H(+). In Oryza sativa subsp. japonica (Rice), this protein is Probable aldehyde oxidase 4.